The primary structure comprises 172 residues: Protein-export protein SecB (172 aa).

It belongs to the SecB family. In terms of assembly, homotetramer, a dimer of dimers. One homotetramer interacts with 1 SecA dimer.

The protein resides in the cytoplasm. One of the proteins required for the normal export of preproteins out of the cell cytoplasm. It is a molecular chaperone that binds to a subset of precursor proteins, maintaining them in a translocation-competent state. It also specifically binds to its receptor SecA. This Ralstonia pickettii (strain 12J) protein is Protein-export protein SecB.